A 525-amino-acid chain; its full sequence is GMP synthase [glutamine-hydrolyzing] (525 aa).

The Glutamine amidotransferase type-1 domain maps to 8-207 (KILILDFGSQ…ALDICGCAAN (200 aa)). The Nucleophile role is filled by C85. Active-site residues include H181 and E183. The GMPS ATP-PPase domain maps to 208–400 (WKPSSIIEDA…LGLPYNMLYR (193 aa)). An ATP-binding site is contributed by 235-241 (SGGVDSS).

Homodimer.

It carries out the reaction XMP + L-glutamine + ATP + H2O = GMP + L-glutamate + AMP + diphosphate + 2 H(+). It functions in the pathway purine metabolism; GMP biosynthesis; GMP from XMP (L-Gln route): step 1/1. Functionally, catalyzes the synthesis of GMP from XMP. This Shewanella sp. (strain MR-7) protein is GMP synthase [glutamine-hydrolyzing].